A 119-amino-acid polypeptide reads, in one-letter code: Large ribosomal subunit protein bL20c (119 aa).

This sequence belongs to the bacterial ribosomal protein bL20 family.

The protein localises to the plastid. It localises to the chloroplast. Its function is as follows. Binds directly to 23S ribosomal RNA and is necessary for the in vitro assembly process of the 50S ribosomal subunit. It is not involved in the protein synthesizing functions of that subunit. This Nandina domestica (Heavenly bamboo) protein is Large ribosomal subunit protein bL20c.